A 206-amino-acid chain; its full sequence is Two-component response regulator ORR7 (206 aa).

The disordered stretch occupies residues 53-92; it reads VVPLHDNASAEDDDDDEEDDDEDDDDDDDEDDEEEAAPPY. Residues 61–88 are compositionally biased toward acidic residues; it reads SAEDDDDDEEDDDEDDDDDDDEDDEEEA. The Response regulatory domain occupies 92 to 205; sequence YVMAVDDSSV…DISRITSRML (114 aa). Asp138 carries the 4-aspartylphosphate modification.

This sequence belongs to the ARR family. Type-A subfamily. Two-component system major event consists of a His-to-Asp phosphorelay between a sensor histidine kinase (HK) and a response regulator (RR). In plants, the His-to-Asp phosphorelay involves an additional intermediate named Histidine-containing phosphotransfer protein (HPt). This multistep phosphorelay consists of a His-Asp-His-Asp sequential transfer of a phosphate group between first a His and an Asp of the HK protein, followed by the transfer to a conserved His of the HPt protein and finally the transfer to an Asp in the receiver domain of the RR protein. In terms of tissue distribution, expressed in flowers, and at low levels in roots, mature leaves and shoots.

Functions as a response regulator involved in His-to-Asp phosphorelay signal transduction system. Phosphorylation of the Asp residue in the receiver domain activates the ability of the protein to promote the transcription of target genes. Type-A response regulators seem to act as negative regulators of the cytokinin signaling. The polypeptide is Two-component response regulator ORR7 (Oryza sativa subsp. indica (Rice)).